The chain runs to 632 residues: Chaperone protein HtpG (632 aa).

Positions 1–339 (MTQQTMSFQA…SSDLPLNVSR (339 aa)) are a; substrate-binding. The tract at residues 340–559 (EILQESRDVK…DNDMSGYLQR (220 aa)) is b. The interval 560-632 (MLKAAGQSAP…TNALLLSRAA (73 aa)) is c.

It belongs to the heat shock protein 90 family. In terms of assembly, homodimer.

Its subcellular location is the cytoplasm. Its function is as follows. Molecular chaperone. Has ATPase activity. This chain is Chaperone protein HtpG, found in Burkholderia pseudomallei (strain 1106a).